A 507-amino-acid chain; its full sequence is Steroid (22S)-hydroxylase (507 aa).

The helical transmembrane segment at 12 to 32 (LLFFLPYILLALLTFYTTTVA) threads the bilayer. Cys444 contributes to the heme binding site.

It belongs to the cytochrome P450 family. It depends on heme as a cofactor.

Its subcellular location is the membrane. It carries out the reaction a C27-steroid + reduced [NADPH--hemoprotein reductase] + O2 = a (22S)-22-hydroxy C27-steroid + oxidized [NADPH--hemoprotein reductase] + H2O + H(+). It catalyses the reaction a C28-steroid + reduced [NADPH--hemoprotein reductase] + O2 = a (22S)-22-hydroxy C28-steroid + oxidized [NADPH--hemoprotein reductase] + H2O + H(+). The enzyme catalyses campesterol + reduced [NADPH--hemoprotein reductase] + O2 = (22S)-22-hydroxycampesterol + oxidized [NADPH--hemoprotein reductase] + H2O + H(+). The catalysed reaction is campestanol + reduced [NADPH--hemoprotein reductase] + O2 = 6-deoxycathasterone + oxidized [NADPH--hemoprotein reductase] + H2O + H(+). It functions in the pathway plant hormone biosynthesis; brassinosteroid biosynthesis. In terms of biological role, involved in reduction steps of the biosynthesis of plant campesterol-derivative steroids, ending to castasterone (CS) but missing brassinolide (BL). Catalyzes the conversion of campesterol (CR) to (22S)-22-hydroxycampesterol (22-OHCR, 22-hydroxyCR) and of campestanol (CN) to 6-deoxycathasterone (6-deoxoCT). This chain is Steroid (22S)-hydroxylase, found in Brachypodium distachyon (Purple false brome).